We begin with the raw amino-acid sequence, 214 residues long: Glycerol-3-phosphate acyltransferase (214 aa).

A run of 5 helical transmembrane segments spans residues 8–28 (LILA…QIFF), 70–90 (LLPL…LIAV), 111–131 (AGVV…IFIV), 144–164 (IVVA…GIIL), and 165–185 (PSYD…ILIR).

The protein belongs to the PlsY family. Probably interacts with PlsX.

The protein localises to the cell membrane. It catalyses the reaction an acyl phosphate + sn-glycerol 3-phosphate = a 1-acyl-sn-glycero-3-phosphate + phosphate. It functions in the pathway lipid metabolism; phospholipid metabolism. In terms of biological role, catalyzes the transfer of an acyl group from acyl-phosphate (acyl-PO(4)) to glycerol-3-phosphate (G3P) to form lysophosphatidic acid (LPA). This enzyme utilizes acyl-phosphate as fatty acyl donor, but not acyl-CoA or acyl-ACP. This is Glycerol-3-phosphate acyltransferase from Streptococcus gordonii (strain Challis / ATCC 35105 / BCRC 15272 / CH1 / DL1 / V288).